We begin with the raw amino-acid sequence, 1678 residues long: Nuclear pore complex protein Nup98-Nup96 (1678 aa).

Residues 1 to 11 (MFGQNKSFGSS) are compositionally biased toward low complexity. 5 disordered regions span residues 1 to 41 (MFGQ…QPAN), 68 to 100 (SSIF…FGST), 301 to 366 (TTGS…GAPA), 441 to 473 (FGNT…TQAT), and 603 to 631 (SKEA…RSVH). Residues 12–22 (SFGGGSSGSGL) show a composition bias toward gly residues. Low complexity-rich tracts occupy residues 23–38 (FGQN…LFGQ) and 73–83 (SPQQPQNNQSS). A compositionally biased stretch (polar residues) spans 306–329 (LFGNQQPQTNTGGSLFGNTQNQNQ). Over residues 345–366 (FGQAQQQPQQQSSGFSFGGAPA) the composition is skewed to low complexity. Polar residues-rich tracts occupy residues 456–473 (SQPQ…TQAT) and 615–628 (RNST…LTNR). The Peptidase S59 domain maps to 777-919 (KPDYFSLPTI…GSWVFRVDHF (143 aa)). The active-site Nucleophile is Ser920.

This sequence belongs to the nucleoporin GLFG family. In terms of assembly, part of the NPC. The Nup98 and Nup96 chains are autoproteolytically processed from a single precursor protein.

Its subcellular location is the cytoplasmic granule. The protein resides in the nucleus membrane. The protein localises to the nucleus. It localises to the nuclear pore complex. It is found in the nucleus envelope. Its subcellular location is the chromosome. Its function is as follows. Nup98 and Nup96 play a role in the bidirectional transport across the nucleoporin complex (NPC). Required for the nuclear import of hcp-4 during mitotic prophase, this step is essential for centrosome assembly and resolution. Regulates nucleoporin npp-5 localization to the nuclear membrane during interphase and to kinetochores during metaphase. Has a role in P granule integrity; may promote the 'liquid phase' of P granules by increasing the number of interacting RNA-protein complexes. Binds nos-2 mRNA, probably indirectly, and promotes its accumulation in P granules. This is Nuclear pore complex protein Nup98-Nup96 from Caenorhabditis elegans.